Here is a 286-residue protein sequence, read N- to C-terminus: Bifunctional protein FolD (286 aa).

NADP(+) contacts are provided by residues 165-167 and Ser190; that span reads GRS.

Belongs to the tetrahydrofolate dehydrogenase/cyclohydrolase family. In terms of assembly, homodimer.

The enzyme catalyses (6R)-5,10-methylene-5,6,7,8-tetrahydrofolate + NADP(+) = (6R)-5,10-methenyltetrahydrofolate + NADPH. The catalysed reaction is (6R)-5,10-methenyltetrahydrofolate + H2O = (6R)-10-formyltetrahydrofolate + H(+). Its pathway is one-carbon metabolism; tetrahydrofolate interconversion. Its function is as follows. Catalyzes the oxidation of 5,10-methylenetetrahydrofolate to 5,10-methenyltetrahydrofolate and then the hydrolysis of 5,10-methenyltetrahydrofolate to 10-formyltetrahydrofolate. This Burkholderia cenocepacia (strain ATCC BAA-245 / DSM 16553 / LMG 16656 / NCTC 13227 / J2315 / CF5610) (Burkholderia cepacia (strain J2315)) protein is Bifunctional protein FolD.